A 66-amino-acid chain; its full sequence is Phylloseptin-Az2 (66 aa).

A signal peptide spans 1–22; the sequence is MAFLKKSLFLVLFLGLVSLSIC. The propeptide occupies 23–44; the sequence is EEEKRETEEKENEQEDDDKSEE. The interval 24-45 is disordered; the sequence is EEKRETEEKENEQEDDDKSEEK. Residues 31 to 41 show a composition bias toward acidic residues; that stretch reads EKENEQEDDDK. Phenylalanine 65 carries the phenylalanine amide modification.

Expressed by the skin glands.

The protein localises to the secreted. Its function is as follows. Has antibacterial activity against the Gram-negative bacteria E.coli ATCC 11775 (MIC=7.2 uM), and the Gram-positive bacteria S.aureus ATCC 12600 (MIC=3.6 uM) and M.luteus ATCC 49732 (MIC=1.8 uM). Does not inhibit the growth of the fungus C.albicans. The chain is Phylloseptin-Az2 from Pithecopus azureus (Orange-legged monkey tree frog).